The sequence spans 347 residues: Mitochondrial carrier protein rim2 (347 aa).

Solcar repeat units follow at residues 32 to 136 (PPPL…GKRI), 146 to 234 (ENSQ…FKHA), and 256 to 345 (LDWG…IMHF). 6 helical membrane-spanning segments follow: residues 38–58 (FIAG…LDVV), 105–125 (TRAL…ARSI), 152–172 (LMAA…IWLV), 214–233 (SLLG…KFKH), 262–282 (LGGA…HEVV), and 317–338 (LYGG…LFGS).

The protein localises to the mitochondrion inner membrane. The enzyme catalyses 5-methyl-UTP(out) + UTP(in) = 5-methyl-UTP(in) + UTP(out). Mitochondrial transporter that imports/exports pyrimidine nucleotides into and from mitochondria. Selectively transports uridine, thymidine, and cytosine (deoxy)nucleoside di- and triphosphates by an antiport mechanism. Also transports, with lower efficiency, uridine, thymidine, and cytosine (deoxy)nucleoside monophosphates as well as guanosine (deoxy)nucleoside di- and triphosphate. May import (deoxy)nucleoside triphosphates in exchange for intramitochondrial (deoxy)nucleoside monophosphates, thus providing precursors necessary for de novo synthesis of mitochondrial DNA and RNA while exporting products of their catabolism. Mediates the transport of iron and other divalent metal ions like copper and zinc across the mitochondrial inner membrane in a pyrimidine nucleotide-dependent fashion. Catalyzes the co-import of pyrimidine nucleotides and divalent metal ions including ferrous iron. Participates in mitochondrial genome maintenance, regulation of mitochondrial membrane potential and mitochondrial respiration. The chain is Mitochondrial carrier protein rim2 (rim2) from Schizosaccharomyces pombe (strain 972 / ATCC 24843) (Fission yeast).